Reading from the N-terminus, the 176-residue chain is ATP-dependent protease subunit HslV (176 aa).

Residue threonine 5 is part of the active site. Positions 161, 164, and 167 each coordinate Na(+).

Belongs to the peptidase T1B family. HslV subfamily. In terms of assembly, a double ring-shaped homohexamer of HslV is capped on each side by a ring-shaped HslU homohexamer. The assembly of the HslU/HslV complex is dependent on binding of ATP.

Its subcellular location is the cytoplasm. The enzyme catalyses ATP-dependent cleavage of peptide bonds with broad specificity.. Allosterically activated by HslU binding. Its function is as follows. Protease subunit of a proteasome-like degradation complex believed to be a general protein degrading machinery. This chain is ATP-dependent protease subunit HslV, found in Pelotomaculum thermopropionicum (strain DSM 13744 / JCM 10971 / SI).